Here is an 82-residue protein sequence, read N- to C-terminus: Small ribosomal subunit protein uS17 (82 aa).

This sequence belongs to the universal ribosomal protein uS17 family. As to quaternary structure, part of the 30S ribosomal subunit.

One of the primary rRNA binding proteins, it binds specifically to the 5'-end of 16S ribosomal RNA. In Shewanella frigidimarina (strain NCIMB 400), this protein is Small ribosomal subunit protein uS17.